The following is a 568-amino-acid chain: Sentrin-specific protease 3 (568 aa).

Residues 1 to 119 (MKETIQGTGS…PSHRKTCSQR (119 aa)) are disordered. Phosphoserine is present on residues Ser52, Ser71, and Ser73. Over residues 72–87 (ASEEEEEEEEEDEEEV) the composition is skewed to acidic residues. A compositionally biased stretch (basic residues) spans 106–119 (RALRPSHRKTCSQR). 2 short sequence motifs (nuclear localization signal) span residues 119–122 (RRRR) and 147–153 (RHRGRRR). Residues 155–174 (LAHPKNHLSPQEGGATPQVP) form a disordered region. Ser163 carries the phosphoserine modification. A Phosphothreonine modification is found at Thr170. Residues Ser175, Ser182, Ser206, and Ser226 each carry the phosphoserine modification. A protease region spans residues 380-537 (HVLTMDDLGT…AFVLQYCKHL (158 aa)). Residues His459 and Asp476 contribute to the active site. Cys526 acts as the Nucleophile in catalysis.

Belongs to the peptidase C48 family. As to quaternary structure, component of some MLL1/MLL complex, at least composed of the core components KMT2A/MLL1, ASH2L, HCFC1/HCF1, WDR5 and RBBP5, as well as the facultative components BACC1, CHD8, E2F6, HSP70, INO80C, KANSL1, LAS1L, MAX, MCRS1, MGA, MYST1/MOF, PELP1, PHF20, PRP31, RING2, RUVB1/TIP49A, RUVB2/TIP49B, SENP3, TAF1, TAF4, TAF6, TAF7, TAF9 and TEX10. Interacts with EP300, NPM1 and CDCA8. Component of the 5FMC complex, at least composed of PELP1, LAS1L, TEX10, WDR18 and SENP3; the complex interacts with methylated CHTOP and ZNF148. Interacts with NOL9. Interacts with CCAR2.

It localises to the nucleus. Its subcellular location is the nucleolus. The protein localises to the nucleoplasm. The protein resides in the cytoplasm. With respect to regulation, on oxidative stress, SENP3 degradation is blocked by inhibition of its ubiquitination, which stabilizes it as it accumulates in the nucleoplasm. Protease that releases SUMO2 and SUMO3 monomers from sumoylated substrates, but has only weak activity against SUMO1 conjugates. Deconjugates SUMO2 from MEF2D, which increases its transcriptional activation capability. Deconjugates SUMO2 and SUMO3 from CDCA8. Redox sensor that, when redistributed into nucleoplasm, can act as an effector to enhance HIF1A transcriptional activity by desumoylating EP300. Required for rRNA processing through deconjugation of SUMO2 and SUMO3 from nucleophosmin, NPM1. Plays a role in the regulation of sumoylation status of ZNF148. Functions as a component of the Five Friends of Methylated CHTOP (5FMC) complex; the 5FMC complex is recruited to ZNF148 by methylated CHTOP, leading to desumoylation of ZNF148 and subsequent transactivation of ZNF148 target genes. Deconjugates SUMO2 from KAT5. Catalyzes desumoylation of MRE11. The sequence is that of Sentrin-specific protease 3 (Senp3) from Mus musculus (Mouse).